Consider the following 397-residue polypeptide: Autophagy-related protein 29 (397 aa).

The interval 71–397 (ATAAVRNSGP…RSRYTSSSNQ (327 aa)) is disordered. Residues 230-240 (QYEDDDDDESE) are compositionally biased toward acidic residues. Polar residues predominate over residues 245 to 259 (PYTSPSSKTSAQDLG). A compositionally biased stretch (basic residues) spans 269 to 282 (SGKRPHKSHGKPAI). 2 stretches are compositionally biased toward basic and acidic residues: residues 300–309 (KPDKTDRSTE) and 330–341 (GGKDKGYSREGS). Polar residues-rich tracts occupy residues 343 to 363 (GTPS…TQSA) and 381 to 397 (FSIS…SSNQ).

The protein belongs to the ATG29 family. As to quaternary structure, forms a stable complex with ATG17 and ATG31. Interacts directly with ATG31. The ATG17-ATG29-ATG31 complex interacts with the ATG1-ATG13 complex. Note=The interaction with the ATG1-ATG13 complex is induced by starvation.

It localises to the preautophagosomal structure. In terms of biological role, plays a role in autophagy. Functions at the preautophagosomal structure (PAS) in order to form normal autophagosomes under starvation conditions. Also plays a role in mitophagy. Autophagy is required for proper vegetative growth, asexual/sexual reproduction, and full virulence. Autophagy is particularly involved in the biosynthesis of deoxynivalenol (DON), an important virulence determinant. The protein is Autophagy-related protein 29 of Gibberella zeae (strain ATCC MYA-4620 / CBS 123657 / FGSC 9075 / NRRL 31084 / PH-1) (Wheat head blight fungus).